The following is a 374-amino-acid chain: uncharacterized protein (374 aa).

The chain crosses the membrane as a helical span at residues Ala27 to Tyr49.

The protein resides in the membrane. This is an uncharacterized protein from Methanocaldococcus jannaschii (strain ATCC 43067 / DSM 2661 / JAL-1 / JCM 10045 / NBRC 100440) (Methanococcus jannaschii).